A 1033-amino-acid polypeptide reads, in one-letter code: Isoleucine--tRNA ligase 2 (1033 aa).

The 'HIGH' region motif lies at 47-57; the sequence is PTANGLPHVGH. Residues 590–594 carry the 'KMSKS' region motif; the sequence is KMSKS. Lys593 is an ATP binding site.

The protein belongs to the class-I aminoacyl-tRNA synthetase family. IleS type 2 subfamily. As to quaternary structure, monomer. Zn(2+) is required as a cofactor.

It localises to the cytoplasm. The catalysed reaction is tRNA(Ile) + L-isoleucine + ATP = L-isoleucyl-tRNA(Ile) + AMP + diphosphate. In terms of biological role, catalyzes the attachment of isoleucine to tRNA(Ile). As IleRS can inadvertently accommodate and process structurally similar amino acids such as valine, to avoid such errors it has two additional distinct tRNA(Ile)-dependent editing activities. One activity is designated as 'pretransfer' editing and involves the hydrolysis of activated Val-AMP. The other activity is designated 'posttransfer' editing and involves deacylation of mischarged Val-tRNA(Ile). The chain is Isoleucine--tRNA ligase 2 from Bacillus cereus (strain ZK / E33L).